We begin with the raw amino-acid sequence, 173 residues long: Alpha-crystallin A chain (173 aa).

The residue at position 1 (Met-1) is an N-acetylmethionine. A required for complex formation with BFSP1 and BFSP2 region spans residues 1 to 63 (MDIAIQHPWF…RSVLDSGISE (63 aa)). Gln-6 is subject to Deamidated glutamine; partial. Ser-45 is modified (phosphoserine). Gln-50 is subject to Deamidated glutamine; partial. The region spanning 52-162 (VFRSVLDSGI…GHSERAIPVS (111 aa)) is the sHSP domain. N6-acetyllysine is present on residues Lys-70 and Lys-99. His-100 contributes to the Zn(2+) binding site. Asn-101 carries the deamidated asparagine; partial modification. 2 residues coordinate Zn(2+): Glu-102 and His-107. Position 122 is a phosphoserine (Ser-122). Asn-123 bears the Deamidated asparagine; partial mark. The interval 144-173 (PKVPSGVDAGHSERAIPVSREEKPSSAPSS) is disordered. Residues 153–167 (GHSERAIPVSREEKP) are compositionally biased toward basic and acidic residues. His-154 contributes to the Zn(2+) binding site. Ser-162 carries an O-linked (GlcNAc) serine glycan.

The protein belongs to the small heat shock protein (HSP20) family. As to quaternary structure, heteromer composed of three CRYAA and one CRYAB subunits. Inter-subunit bridging via zinc ions enhances stability, which is crucial as there is no protein turn over in the lens. Can also form homodimers and homotetramers (dimers of dimers) which serve as the building blocks of homooligomers. Within homooligomers, the zinc-binding motif is created from residues of 3 different molecules. His-100 and Glu-102 from one molecule are ligands of the zinc ion, and His-107 and His-154 residues from additional molecules complete the site with tetrahedral coordination geometry. Part of a complex required for lens intermediate filament formation composed of BFSP1, BFSP2 and CRYAA. Post-translationally, acetylation at Lys-70 may increase chaperone activity. In terms of processing, undergoes age-dependent proteolytical cleavage at the C-terminus.

The protein localises to the cytoplasm. It is found in the nucleus. Functionally, contributes to the transparency and refractive index of the lens. Acts as a chaperone, preventing aggregation of various proteins under a wide range of stress conditions. Required for the correct formation of lens intermediate filaments as part of a complex composed of BFSP1, BFSP2 and CRYAA. In Halichoerus grypus (Gray seal), this protein is Alpha-crystallin A chain (CRYAA).